Reading from the N-terminus, the 297-residue chain is Transcription factor MYB1R1 (297 aa).

The interval 44 to 96 (DLSQYEHPNANNNNNGGDNNESSKVAQDEGYASADDAVQHQSNSGRERKRGVP) is disordered. The segment covering 52–63 (NANNNNNGGDNN) has biased composition (low complexity). The HTH myb-type domain maps to 89-145 (RERKRGVPWTEEEHKLFLLGLQKVGKGDWRGISRNFVKTRTPTQVASHAQKYFLRRS). The segment at residues 117-141 (WRGISRNFVKTRTPTQVASHAQKYF) is a DNA-binding region (H-T-H motif).

Its subcellular location is the nucleus. The protein localises to the cytoplasm. It localises to the cytosol. Its function is as follows. Binds selectively to the DNA sequence 5'-[GA]GATAA-3' and may act as a transcription factor involved in the regulation of drought-responsive genes. Enhances stomatal closure in response to abscisic acid (ABA). Confers drought and salt tolerance. The protein is Transcription factor MYB1R1 of Solanum tuberosum (Potato).